Here is a 375-residue protein sequence, read N- to C-terminus: 1-deoxy-D-xylulose 5-phosphate reductoisomerase (375 aa).

Threonine 12, glycine 13, serine 14, isoleucine 15, asparagine 39, and asparagine 115 together coordinate NADPH. Lysine 116 provides a ligand contact to 1-deoxy-D-xylulose 5-phosphate. Glutamate 117 is a binding site for NADPH. Aspartate 141 contacts Mn(2+). Residues serine 142, glutamate 143, serine 163, and histidine 186 each coordinate 1-deoxy-D-xylulose 5-phosphate. Residue glutamate 143 coordinates Mn(2+). Glycine 192 is an NADPH binding site. 4 residues coordinate 1-deoxy-D-xylulose 5-phosphate: serine 199, asparagine 204, lysine 205, and glutamate 208. Residue glutamate 208 participates in Mn(2+) binding.

Belongs to the DXR family. Mg(2+) serves as cofactor. It depends on Mn(2+) as a cofactor.

The catalysed reaction is 2-C-methyl-D-erythritol 4-phosphate + NADP(+) = 1-deoxy-D-xylulose 5-phosphate + NADPH + H(+). The protein operates within isoprenoid biosynthesis; isopentenyl diphosphate biosynthesis via DXP pathway; isopentenyl diphosphate from 1-deoxy-D-xylulose 5-phosphate: step 1/6. Its function is as follows. Catalyzes the NADPH-dependent rearrangement and reduction of 1-deoxy-D-xylulose-5-phosphate (DXP) to 2-C-methyl-D-erythritol 4-phosphate (MEP). In Thermotoga neapolitana (strain ATCC 49049 / DSM 4359 / NBRC 107923 / NS-E), this protein is 1-deoxy-D-xylulose 5-phosphate reductoisomerase.